Consider the following 935-residue polypeptide: Protein translocase subunit SecA (935 aa).

Residues Gln-90, 108 to 112 (GEGKT), and Asp-504 each bind ATP.

It belongs to the SecA family. As to quaternary structure, monomer and homodimer. Part of the essential Sec protein translocation apparatus which comprises SecA, SecYEG and auxiliary proteins SecDF. Other proteins may also be involved.

It localises to the cell inner membrane. The protein resides in the cellular thylakoid membrane. The protein localises to the cytoplasm. The catalysed reaction is ATP + H2O + cellular proteinSide 1 = ADP + phosphate + cellular proteinSide 2.. In terms of biological role, part of the Sec protein translocase complex. Interacts with the SecYEG preprotein conducting channel. Has a central role in coupling the hydrolysis of ATP to the transfer of proteins into and across the cell membrane, serving as an ATP-driven molecular motor driving the stepwise translocation of polypeptide chains across the membrane. Functionally, probably participates in protein translocation into and across both the cytoplasmic and thylakoid membranes in cyanobacterial cells. This chain is Protein translocase subunit SecA, found in Gloeothece citriformis (strain PCC 7424) (Cyanothece sp. (strain PCC 7424)).